The sequence spans 405 residues: Serpin I2 (405 aa).

The first 18 residues, 1-18 (MDTIFLWSLLLLFFGSQA), serve as a signal peptide directing secretion. N-linked (GlcNAc...) asparagine glycans are attached at residues asparagine 202, asparagine 207, and asparagine 306.

Belongs to the serpin family. As to expression, expressed in pancreas and adipose tissues.

It localises to the secreted. In Homo sapiens (Human), this protein is Serpin I2 (SERPINI2).